A 468-amino-acid chain; its full sequence is ATP synthase subunit beta (468 aa).

Position 155-162 (155-162 (GGAGVGKT)) interacts with ATP.

Belongs to the ATPase alpha/beta chains family. F-type ATPases have 2 components, CF(1) - the catalytic core - and CF(0) - the membrane proton channel. CF(1) has five subunits: alpha(3), beta(3), gamma(1), delta(1), epsilon(1). CF(0) has three main subunits: a(1), b(2) and c(9-12). The alpha and beta chains form an alternating ring which encloses part of the gamma chain. CF(1) is attached to CF(0) by a central stalk formed by the gamma and epsilon chains, while a peripheral stalk is formed by the delta and b chains.

It localises to the cell membrane. The enzyme catalyses ATP + H2O + 4 H(+)(in) = ADP + phosphate + 5 H(+)(out). In terms of biological role, produces ATP from ADP in the presence of a proton gradient across the membrane. The catalytic sites are hosted primarily by the beta subunits. The chain is ATP synthase subunit beta from Streptococcus thermophilus (strain CNRZ 1066).